The chain runs to 382 residues: Glutaminyl-peptide cyclotransferase-like protein (382 aa).

The helical transmembrane segment at 35–55 threads the bilayer; sequence LLPLLLALAVGSAFYTIWSGW. Cys-167 and Cys-191 are oxidised to a cystine. Asp-186 serves as a coordination point for Zn(2+). The active-site Proton acceptor is Glu-225. Residue Glu-226 participates in Zn(2+) binding. Asp-269 acts as the Proton acceptor in catalysis. Position 351 (His-351) interacts with Zn(2+).

Belongs to the glutaminyl-peptide cyclotransferase family.

Its subcellular location is the golgi apparatus membrane. It carries out the reaction N-terminal L-glutaminyl-[peptide] = N-terminal 5-oxo-L-prolyl-[peptide] + NH4(+). Responsible for the biosynthesis of pyroglutamyl peptides. In Macaca fascicularis (Crab-eating macaque), this protein is Glutaminyl-peptide cyclotransferase-like protein (QPCTL).